The primary structure comprises 101 residues: MGTPELKIILEFSAGAELLFGNIKRRELTLDGNQKWTISNLLKWMHANILTERPELFLQEDTVRPGILVLINDTDWELLGELDYELQPNDNVLFISTLHGG.

Position 101 is a 1-thioglycine (Gly-101). Residue Gly-101 forms a Glycyl lysine isopeptide (Gly-Lys) (interchain with K-? in acceptor proteins) linkage.

Belongs to the URM1 family. Interacts with cer. Post-translationally, C-terminal thiocarboxylation occurs in 2 steps, it is first acyl-adenylated (-COAMP) via the hesA/moeB/thiF part of the MOCS3 homolog, then thiocarboxylated (-COSH) via the rhodanese domain of the MOCS3 homolog.

It localises to the cytoplasm. It participates in tRNA modification; 5-methoxycarbonylmethyl-2-thiouridine-tRNA biosynthesis. Acts as a sulfur carrier required for 2-thiolation of mcm(5)S(2)U at tRNA wobble positions of cytosolic tRNA(Lys), tRNA(Glu) and tRNA(Gln). Serves as sulfur donor in tRNA 2-thiolation reaction by being thiocarboxylated (-COSH) at its C-terminus by MOCS3. The sulfur is then transferred to tRNA to form 2-thiolation of mcm(5)S(2)U. Also acts as a ubiquitin-like protein (UBL) that is covalently conjugated via an isopeptide bond to lysine residues of target proteins such as Prx2/Jafrac1, Ciao1, Eip71CD and GILT1. The thiocarboxylated form serves as substrate for conjugation and oxidative stress specifically induces the formation of UBL-protein conjugates. This is Ubiquitin-related modifier 1 homolog from Drosophila simulans (Fruit fly).